A 673-amino-acid polypeptide reads, in one-letter code: MESFIVYSVLAGVIALIFAFMLSSFISKESAGNERMQEIAGHIHDGAMAFLKTEYKYLTGFIVIVTVILAIFVGWQTAACFILGAIFSIFAGYFGMNVATKANVRTAEAARHSQGKALNIAFSGGAVMGMSVVGLGVVGIGIMYYIFGGNMEFVTGFGLGASSIALFARVGGGIYTKAADVGADLVGKVEAGIPEDDPRNPAVIADNVGDNVGDVAGMGADLFESYVGSIISALTLGTVVYANKEGVMFPLILSSIGIVASIIGILFSRKSKAKDPQKALNTGTYIGGIIVIVSAAILSNTIFGNLKAFFAVASGLVVGMIIGKITEMYTSDAYSSVQKIANQSETGPATTIISGLAVGMYSTLWPIVLISIGVLVSFFVMGGGSNAMVGLYGISLAAVGMLSTTGLTVAVDAYGPIADNAGGIAEMSELPHEVREITDKLDSVGNTTAAIGKGFAIGSAALTALSLFASYAQATELESIDILNTVTLVGLFIGAMLPFLFGALTMESVGKAANEMIEEVRRQFKTIPGIMEGKATPDYKKCVDISTAAAIREMILPGVLAIVVPVAMGLLLGKEALGGLLAGALVSGVLVGILMSNAGGAWDNAKKYIEGGAHGGKGSEAHKAAVVGDTVGDPFKDTSGPSMNILIKLMTIVSLVFAPVVLQYGGILLNLIK.

5 consecutive transmembrane segments (helical) span residues 3–23, 62–82, 84–104, 127–147, and 154–174; these read SFIVYSVLAGVIALIFAFMLS, IVIVTVILAIFVGWQTAACFI, GAIFSIFAGYFGMNVATKANV, VMGMSVVGLGVVGIGIMYYIF, and VTGFGLGASSIALFARVGGGI. Lys177 serves as a coordination point for substrate. Residues Asp180, Asp184, Asn207, and Asp210 each coordinate Mg(2+). A run of 6 helical transmembrane segments spans residues 222 to 242, 247 to 267, 279 to 299, 302 to 322, 364 to 384, and 387 to 407; these read LFESYVGSIISALTLGTVVYA, VMFPLILSSIGIVASIIGILF, ALNTGTYIGGIIVIVSAAILS, IFGNLKAFFAVASGLVVGMII, LWPIVLISIGVLVSFFVMGGG, and AMVGLYGISLAAVGMLSTTGL. Residue Asp419 participates in Mg(2+) binding. Transmembrane regions (helical) follow at residues 449 to 469, 486 to 506, 553 to 573, and 576 to 596; these read AAIGKGFAIGSAALTALSLFA, VTLVGLFIGAMLPFLFGALTM, EMILPGVLAIVVPVAMGLLLG, and ALGGLLAGALVSGVLVGILMS. Ca(2+)-binding residues include Asp603, Asp629, and Asp633. Lys636 is a binding site for substrate. Residues 652–672 traverse the membrane as a helical segment; sequence IVSLVFAPVVLQYGGILLNLI.

The protein belongs to the H(+)-translocating pyrophosphatase (TC 3.A.10) family. K(+)-stimulated subfamily. As to quaternary structure, homodimer. Mg(2+) is required as a cofactor.

Its subcellular location is the cell membrane. It carries out the reaction Na(+)(in) + diphosphate + H2O = Na(+)(out) + 2 phosphate + H(+). With respect to regulation, requires K(+) for maximal activity. Its function is as follows. Sodium pump that utilizes the energy of pyrophosphate hydrolysis as the driving force for Na(+) movement across the membrane. This chain is Putative K(+)-stimulated pyrophosphate-energized sodium pump, found in Clostridium tetani (strain Massachusetts / E88).